A 532-amino-acid chain; its full sequence is Probable NAD kinase 1 (532 aa).

Residues 1 to 26 are compositionally biased toward basic and acidic residues; that stretch reads MSLDELPHKVSDERVNHDTVTSHESE. The tract at residues 1-32 is disordered; sequence MSLDELPHKVSDERVNHDTVTSHESEIGSGSI.

It belongs to the NAD kinase family.

It catalyses the reaction NAD(+) + ATP = ADP + NADP(+) + H(+). The protein is Probable NAD kinase 1 of Oryza sativa subsp. japonica (Rice).